Consider the following 160-residue polypeptide: uncharacterized protein (160 aa).

Residues 1–21 (MSIQTLIIISIVIFILWLTFT) traverse the membrane as a helical segment.

The protein belongs to the IIV-6 203L/325L family.

It localises to the membrane. This is an uncharacterized protein from Invertebrate iridescent virus 6 (IIV-6).